The chain runs to 126 residues: Aspartate 1-decarboxylase (126 aa).

Catalysis depends on S25, which acts as the Schiff-base intermediate with substrate; via pyruvic acid. Position 25 is a pyruvic acid (Ser) (S25). A substrate-binding site is contributed by T57. Y58 acts as the Proton donor in catalysis. 73 to 75 (GAA) contributes to the substrate binding site.

The protein belongs to the PanD family. Heterooctamer of four alpha and four beta subunits. The cofactor is pyruvate. In terms of processing, is synthesized initially as an inactive proenzyme, which is activated by self-cleavage at a specific serine bond to produce a beta-subunit with a hydroxyl group at its C-terminus and an alpha-subunit with a pyruvoyl group at its N-terminus.

Its subcellular location is the cytoplasm. The catalysed reaction is L-aspartate + H(+) = beta-alanine + CO2. The protein operates within cofactor biosynthesis; (R)-pantothenate biosynthesis; beta-alanine from L-aspartate: step 1/1. Its function is as follows. Catalyzes the pyruvoyl-dependent decarboxylation of aspartate to produce beta-alanine. The sequence is that of Aspartate 1-decarboxylase from Citrobacter koseri (strain ATCC BAA-895 / CDC 4225-83 / SGSC4696).